The primary structure comprises 91 residues: Sec-independent protein translocase protein TatA (91 aa).

Residues 1–21 traverse the membrane as a helical segment; it reads MGSMSVWHWVIVAVVVMLLFG. Positions 42 to 91 are disordered; it reads GMADDETQPTNTTSVPPVGPNDPVRTLPHQGAPGTAPQQTHVPAGDHKAV.

This sequence belongs to the TatA/E family. The Tat system comprises two distinct complexes: a TatABC complex, containing multiple copies of TatA, TatB and TatC subunits, and a separate TatA complex, containing only TatA subunits. Substrates initially bind to the TatABC complex, which probably triggers association of the separate TatA complex to form the active translocon.

It localises to the cell inner membrane. Part of the twin-arginine translocation (Tat) system that transports large folded proteins containing a characteristic twin-arginine motif in their signal peptide across membranes. TatA could form the protein-conducting channel of the Tat system. This Methylorubrum populi (strain ATCC BAA-705 / NCIMB 13946 / BJ001) (Methylobacterium populi) protein is Sec-independent protein translocase protein TatA.